Reading from the N-terminus, the 520-residue chain is Eukaryotic translation initiation factor 3 subunit L (520 aa).

The PCI domain maps to 278–478 (FATYYYVGIC…ELDIALENDL (201 aa)).

It belongs to the eIF-3 subunit L family. Component of the eukaryotic translation initiation factor 3 (eIF-3) complex.

The protein localises to the cytoplasm. In terms of biological role, component of the eukaryotic translation initiation factor 3 (eIF-3) complex, which is involved in protein synthesis of a specialized repertoire of mRNAs and, together with other initiation factors, stimulates binding of mRNA and methionyl-tRNAi to the 40S ribosome. The eIF-3 complex specifically targets and initiates translation of a subset of mRNAs involved in cell proliferation. The sequence is that of Eukaryotic translation initiation factor 3 subunit L from Yarrowia lipolytica (strain CLIB 122 / E 150) (Yeast).